A 209-amino-acid chain; its full sequence is Transmembrane domain-containing protein TMIGD3 (209 aa).

The N-terminal stretch at 1–15 (MEFLLLLSLALFSDA) is a signal peptide. The chain crosses the membrane as a helical span at residues 152–172 (SILIICILITSLGIIFIISHL). Residues 179–201 (QRNREVTGKSISRNPQASQGPSM) are disordered. Residues 187-201 (KSISRNPQASQGPSM) are compositionally biased toward polar residues.

The protein resides in the membrane. This chain is Transmembrane domain-containing protein TMIGD3 (Tmigd3), found in Mus musculus (Mouse).